Reading from the N-terminus, the 333-residue chain is Ketol-acid reductoisomerase (NADP(+)) (333 aa).

The KARI N-terminal Rossmann domain maps to 1 to 179 (MFYDDDADLS…GGTRAGVIKT (179 aa)). NADP(+) contacts are provided by residues 22–25 (YGSQ), Lys45, Ser48, Ser50, and 80–83 (DTAQ). His105 is an active-site residue. Residue Gly131 participates in NADP(+) binding. In terms of domain architecture, KARI C-terminal knotted spans 180–325 (TFKDETETDL…KKLRDLMSWV (146 aa)). Asp188, Glu192, Glu224, and Glu228 together coordinate Mg(2+). Ser249 is a substrate binding site.

This sequence belongs to the ketol-acid reductoisomerase family. It depends on Mg(2+) as a cofactor.

It carries out the reaction (2R)-2,3-dihydroxy-3-methylbutanoate + NADP(+) = (2S)-2-acetolactate + NADPH + H(+). The enzyme catalyses (2R,3R)-2,3-dihydroxy-3-methylpentanoate + NADP(+) = (S)-2-ethyl-2-hydroxy-3-oxobutanoate + NADPH + H(+). Its pathway is amino-acid biosynthesis; L-isoleucine biosynthesis; L-isoleucine from 2-oxobutanoate: step 2/4. It functions in the pathway amino-acid biosynthesis; L-valine biosynthesis; L-valine from pyruvate: step 2/4. Its function is as follows. Involved in the biosynthesis of branched-chain amino acids (BCAA). Catalyzes an alkyl-migration followed by a ketol-acid reduction of (S)-2-acetolactate (S2AL) to yield (R)-2,3-dihydroxy-isovalerate. In the isomerase reaction, S2AL is rearranged via a Mg-dependent methyl migration to produce 3-hydroxy-3-methyl-2-ketobutyrate (HMKB). In the reductase reaction, this 2-ketoacid undergoes a metal-dependent reduction by NADPH to yield (R)-2,3-dihydroxy-isovalerate. The sequence is that of Ketol-acid reductoisomerase (NADP(+)) from Mycobacterium ulcerans (strain Agy99).